Here is a 339-residue protein sequence, read N- to C-terminus: Glutamyl-tRNA reductase (339 aa).

Substrate is bound by residues 50-53, Ser-102, 107-109, and Gln-113; these read TCHR and ETE. The Nucleophile role is filled by Cys-51. 181-186 contacts NADP(+); it reads GYSDIN.

The protein belongs to the glutamyl-tRNA reductase family. Homodimer.

It catalyses the reaction (S)-4-amino-5-oxopentanoate + tRNA(Glu) + NADP(+) = L-glutamyl-tRNA(Glu) + NADPH + H(+). The protein operates within porphyrin-containing compound metabolism; protoporphyrin-IX biosynthesis; 5-aminolevulinate from L-glutamyl-tRNA(Glu): step 1/2. Its function is as follows. Catalyzes the NADPH-dependent reduction of glutamyl-tRNA(Glu) to glutamate 1-semialdehyde (GSA). This Chlamydia pneumoniae (Chlamydophila pneumoniae) protein is Glutamyl-tRNA reductase.